A 117-amino-acid chain; its full sequence is Putative iron-sulfur cluster insertion protein ErpA (117 aa).

3 residues coordinate iron-sulfur cluster: C45, C109, and C111.

The protein belongs to the HesB/IscA family. Homodimer. Iron-sulfur cluster serves as cofactor.

Functionally, required for insertion of 4Fe-4S clusters. This Chromobacterium violaceum (strain ATCC 12472 / DSM 30191 / JCM 1249 / CCUG 213 / NBRC 12614 / NCIMB 9131 / NCTC 9757 / MK) protein is Putative iron-sulfur cluster insertion protein ErpA.